The sequence spans 58 residues: Large ribosomal subunit protein uL30 (58 aa).

The protein belongs to the universal ribosomal protein uL30 family. In terms of assembly, part of the 50S ribosomal subunit.

The sequence is that of Large ribosomal subunit protein uL30 from Pseudomonas putida (strain W619).